A 292-amino-acid polypeptide reads, in one-letter code: Protease HtpX (292 aa).

A run of 2 helical transmembrane segments spans residues 5 to 25 and 35 to 55; these read VVLFLLTNFAVLILAGIVMSV and GLLVMAAIFGFGGSFISLLLS. Position 140 (His140) interacts with Zn(2+). Glu141 is an active-site residue. His144 is a binding site for Zn(2+). 2 consecutive transmembrane segments (helical) span residues 155 to 175 and 193 to 213; these read LLQGVLNTFVIVLARVVGGII and IIVFVLEMVFGLFATMIAMWF. Glu218 is a binding site for Zn(2+).

This sequence belongs to the peptidase M48B family. Requires Zn(2+) as cofactor.

The protein localises to the cell inner membrane. This is Protease HtpX from Xanthomonas campestris pv. campestris (strain 8004).